We begin with the raw amino-acid sequence, 202 residues long: Holliday junction branch migration complex subunit RuvA (202 aa).

Positions 1 to 65 (MIAYVEGRLA…EDALELYGFA (65 aa)) are domain I. A domain II region spans residues 66–144 (TWDERQTFIV…VEDLPAAAPL (79 aa)). The segment at 145–155 (VTGGAPGGVFR) is flexible linker. Positions 155-202 (RDALAGLANLGYGEEEASHVLKDVLHGEPDLDVGGALRAALRALARGR) are domain III.

This sequence belongs to the RuvA family. Homotetramer. Forms an RuvA(8)-RuvB(12)-Holliday junction (HJ) complex. HJ DNA is sandwiched between 2 RuvA tetramers; dsDNA enters through RuvA and exits via RuvB. An RuvB hexamer assembles on each DNA strand where it exits the tetramer. Each RuvB hexamer is contacted by two RuvA subunits (via domain III) on 2 adjacent RuvB subunits; this complex drives branch migration. In the full resolvosome a probable DNA-RuvA(4)-RuvB(12)-RuvC(2) complex forms which resolves the HJ.

The protein resides in the cytoplasm. The RuvA-RuvB-RuvC complex processes Holliday junction (HJ) DNA during genetic recombination and DNA repair, while the RuvA-RuvB complex plays an important role in the rescue of blocked DNA replication forks via replication fork reversal (RFR). RuvA specifically binds to HJ cruciform DNA, conferring on it an open structure. The RuvB hexamer acts as an ATP-dependent pump, pulling dsDNA into and through the RuvAB complex. HJ branch migration allows RuvC to scan DNA until it finds its consensus sequence, where it cleaves and resolves the cruciform DNA. This is Holliday junction branch migration complex subunit RuvA from Nitratidesulfovibrio vulgaris (strain ATCC 29579 / DSM 644 / CCUG 34227 / NCIMB 8303 / VKM B-1760 / Hildenborough) (Desulfovibrio vulgaris).